The sequence spans 1481 residues: Protein shortage in chiasmata 1 ortholog (1481 aa).

Disordered stretches follow at residues 479-498 (TDVH…EKEV) and 512-560 (KSKV…IQAS). The span at 513-531 (SKVEANPKNDQEPEARIMQ) shows a compositional bias: basic and acidic residues. The span at 543–560 (SSQVPSAESASSSQIQAS) shows a compositional bias: low complexity.

This sequence belongs to the XPF family. Highly divergent. In terms of assembly, interacts with TEX11. Interacts with SPO16. In terms of tissue distribution, mainly expressed in adult testis.

Its subcellular location is the chromosome. Functionally, ATPase required during meiosis for the formation of crossover recombination intermediates. Binds DNA: preferentially binds to single-stranded DNA and DNA branched structures. Does not show nuclease activity in vitro, but shows ATPase activity, which is stimulated by the presence of single-stranded DNA. Plays a key role in homologous recombination and crossing-over in meiotic prophase I in male and female germ cells. Required for proper synaptonemal complex assembly and homologous chromosome pairing. Required for recruitment of TEX11 and MSH4 to recombination intermediates. The chain is Protein shortage in chiasmata 1 ortholog from Mus musculus (Mouse).